A 251-amino-acid chain; its full sequence is tRNA pseudouridine synthase A (251 aa).

Residue aspartate 52 is the Nucleophile of the active site. Residue tyrosine 113 coordinates substrate.

It belongs to the tRNA pseudouridine synthase TruA family. Homodimer.

The enzyme catalyses uridine(38/39/40) in tRNA = pseudouridine(38/39/40) in tRNA. Functionally, formation of pseudouridine at positions 38, 39 and 40 in the anticodon stem and loop of transfer RNAs. The chain is tRNA pseudouridine synthase A from Brucella anthropi (strain ATCC 49188 / DSM 6882 / CCUG 24695 / JCM 21032 / LMG 3331 / NBRC 15819 / NCTC 12168 / Alc 37) (Ochrobactrum anthropi).